The chain runs to 409 residues: Glutamyl-tRNA reductase (409 aa).

Substrate contacts are provided by residues 46–49 (TCNR), S88, 93–95 (ENE), and Q99. Catalysis depends on C47, which acts as the Nucleophile. 164 to 169 (GNGMIA) serves as a coordination point for NADP(+).

The protein belongs to the glutamyl-tRNA reductase family. Homodimer.

The enzyme catalyses (S)-4-amino-5-oxopentanoate + tRNA(Glu) + NADP(+) = L-glutamyl-tRNA(Glu) + NADPH + H(+). It functions in the pathway porphyrin-containing compound metabolism; protoporphyrin-IX biosynthesis; 5-aminolevulinate from L-glutamyl-tRNA(Glu): step 1/2. In terms of biological role, catalyzes the NADPH-dependent reduction of glutamyl-tRNA(Glu) to glutamate 1-semialdehyde (GSA). In Thermoplasma acidophilum (strain ATCC 25905 / DSM 1728 / JCM 9062 / NBRC 15155 / AMRC-C165), this protein is Glutamyl-tRNA reductase.